Here is a 258-residue protein sequence, read N- to C-terminus: Snake venom serine protease KN13 (258 aa).

Positions 1 to 18 (MVLIRVLANLLILQLSYA) are cleaved as a signal peptide. Residues 19 to 24 (QRSSEL) constitute a propeptide that is removed on maturation. The Peptidase S1 domain occupies 25–249 (VIGGDECNIN…HLDWIQNIIA (225 aa)). 6 disulfide bridges follow: cysteine 31–cysteine 163, cysteine 50–cysteine 66, cysteine 98–cysteine 256, cysteine 142–cysteine 210, cysteine 174–cysteine 189, and cysteine 200–cysteine 225. The active-site Charge relay system is the histidine 65. The N-linked (GlcNAc...) asparagine glycan is linked to asparagine 103. The Charge relay system role is filled by aspartate 110. N-linked (GlcNAc...) asparagine glycans are attached at residues asparagine 121, asparagine 122, asparagine 154, and asparagine 170. The Charge relay system role is filled by serine 204. Asparagine 251 carries an N-linked (GlcNAc...) asparagine glycan.

Belongs to the peptidase S1 family. Snake venom subfamily. In terms of assembly, monomer. As to expression, expressed by the venom gland.

Its subcellular location is the secreted. Functionally, snake venom serine protease that may act in the hemostasis system of the prey. The polypeptide is Snake venom serine protease KN13 (Trimeresurus stejnegeri (Chinese green tree viper)).